The following is a 660-amino-acid chain: Acetyl-coenzyme A synthetase (660 aa).

CoA-binding positions include 197-200 and Thr-317; that span reads RGGK. ATP is bound by residues 397-399, 421-426, Asp-512, and Arg-528; these read GEP and DTWWQT. Ser-536 is a binding site for CoA. Arg-539 provides a ligand contact to ATP. The Mg(2+) site is built by Val-550 and Val-555. Position 625 is an N6-acetyllysine (Lys-625).

This sequence belongs to the ATP-dependent AMP-binding enzyme family. The cofactor is Mg(2+). In terms of processing, acetylated. Deacetylation by the SIR2-homolog deacetylase activates the enzyme.

It catalyses the reaction acetate + ATP + CoA = acetyl-CoA + AMP + diphosphate. Its function is as follows. Catalyzes the conversion of acetate into acetyl-CoA (AcCoA), an essential intermediate at the junction of anabolic and catabolic pathways. AcsA undergoes a two-step reaction. In the first half reaction, AcsA combines acetate with ATP to form acetyl-adenylate (AcAMP) intermediate. In the second half reaction, it can then transfer the acetyl group from AcAMP to the sulfhydryl group of CoA, forming the product AcCoA. The polypeptide is Acetyl-coenzyme A synthetase (Paraburkholderia phymatum (strain DSM 17167 / CIP 108236 / LMG 21445 / STM815) (Burkholderia phymatum)).